Here is a 388-residue protein sequence, read N- to C-terminus: Staphopain A (388 aa).

The N-terminal stretch at 1–25 is a signal peptide; the sequence is MKRNFPKLIALSLIFSLSITPIANA. The propeptide occupies 26 to 214; that stretch reads ESNSNIKAKD…TSQFKSNNYT (189 aa). Residues cysteine 238, histidine 334, and asparagine 355 contribute to the active site.

It belongs to the peptidase C47 family. As to quaternary structure, in the cytoplasm, prematurely activated/folded ScpA forms a stable non-covalent complex with ScpB. In terms of processing, cleavage leads to the activation of ScpA probably by an auto-catalytic manner.

The protein resides in the secreted. The catalysed reaction is Broad endopeptidase action on proteins including elastin, but rather limited hydrolysis of small-molecule substrates. Assays are conveniently made with hemoglobin, casein or Z-Phe-Arg-NHMec as substrate.. Prematurely activated/folded staphopain A is inhibited by staphostatin A (ScpB), which is probably required to protect staphylococcal cytoplasmic proteins from degradation by ScpA. Cysteine protease that plays an important role in the inhibition of host innate immune response. Cleaves host elastins found in connective tissues, pulmonary surfactant protein A in the lungs, and the chemokine receptor CXCR2 on leukocytes. Proteolytic cleavage of surfactant protein A impairs bacterial phagocytosis by neutrophils while CXCR2 degradation blocks neutrophil activation and chemotaxis. Additionally, promotes vascular leakage by activating the plasma kallikerin/kinin system, resulting in hypotension. This chain is Staphopain A (sspP), found in Staphylococcus aureus (strain MRSA252).